Here is a 477-residue protein sequence, read N- to C-terminus: Probable ribonuclease FAU-1 (477 aa).

Belongs to the FAU-1 family.

Probable RNase involved in rRNA stability through maturation and/or degradation of precursor rRNAs. Binds to RNA in loop regions with AU-rich sequences. The sequence is that of Probable ribonuclease FAU-1 from Staphylothermus marinus (strain ATCC 43588 / DSM 3639 / JCM 9404 / F1).